The sequence spans 328 residues: uncharacterized protein (328 aa).

Positions 3 to 126 constitute a Bro-N domain; the sequence is RVKIGEFKFG…EVIPQVLCTG (124 aa).

This is an uncharacterized protein from Autographa californica nuclear polyhedrosis virus (AcMNPV).